A 284-amino-acid chain; its full sequence is 2-dehydro-3-deoxyphosphooctonate aldolase (284 aa).

The protein belongs to the KdsA family.

It is found in the cytoplasm. It catalyses the reaction D-arabinose 5-phosphate + phosphoenolpyruvate + H2O = 3-deoxy-alpha-D-manno-2-octulosonate-8-phosphate + phosphate. Its pathway is carbohydrate biosynthesis; 3-deoxy-D-manno-octulosonate biosynthesis; 3-deoxy-D-manno-octulosonate from D-ribulose 5-phosphate: step 2/3. It participates in bacterial outer membrane biogenesis; lipopolysaccharide biosynthesis. This Salmonella enteritidis PT4 (strain P125109) protein is 2-dehydro-3-deoxyphosphooctonate aldolase.